We begin with the raw amino-acid sequence, 454 residues long: Bifunctional protein GlmU (454 aa).

Residues methionine 1–arginine 229 form a pyrophosphorylase region. Residues leucine 8–glycine 11, lysine 22, glutamine 72, and glycine 77–threonine 78 contribute to the UDP-N-acetyl-alpha-D-glucosamine site. Aspartate 102 is a binding site for Mg(2+). 3 residues coordinate UDP-N-acetyl-alpha-D-glucosamine: glycine 139, glutamate 154, and asparagine 227. Asparagine 227 is a Mg(2+) binding site. Residues valine 230–asparagine 250 are linker. The segment at glycine 251 to glutamate 454 is N-acetyltransferase. Arginine 332 and lysine 350 together coordinate UDP-N-acetyl-alpha-D-glucosamine. Histidine 362 functions as the Proton acceptor in the catalytic mechanism. Residues tyrosine 365 and asparagine 376 each coordinate UDP-N-acetyl-alpha-D-glucosamine. Acetyl-CoA-binding positions include asparagine 385 to tyrosine 386, alanine 422, and arginine 439.

In the N-terminal section; belongs to the N-acetylglucosamine-1-phosphate uridyltransferase family. It in the C-terminal section; belongs to the transferase hexapeptide repeat family. Homotrimer. Mg(2+) serves as cofactor.

The protein resides in the cytoplasm. It carries out the reaction alpha-D-glucosamine 1-phosphate + acetyl-CoA = N-acetyl-alpha-D-glucosamine 1-phosphate + CoA + H(+). It catalyses the reaction N-acetyl-alpha-D-glucosamine 1-phosphate + UTP + H(+) = UDP-N-acetyl-alpha-D-glucosamine + diphosphate. Its pathway is nucleotide-sugar biosynthesis; UDP-N-acetyl-alpha-D-glucosamine biosynthesis; N-acetyl-alpha-D-glucosamine 1-phosphate from alpha-D-glucosamine 6-phosphate (route II): step 2/2. It functions in the pathway nucleotide-sugar biosynthesis; UDP-N-acetyl-alpha-D-glucosamine biosynthesis; UDP-N-acetyl-alpha-D-glucosamine from N-acetyl-alpha-D-glucosamine 1-phosphate: step 1/1. The protein operates within bacterial outer membrane biogenesis; LPS lipid A biosynthesis. Its function is as follows. Catalyzes the last two sequential reactions in the de novo biosynthetic pathway for UDP-N-acetylglucosamine (UDP-GlcNAc). The C-terminal domain catalyzes the transfer of acetyl group from acetyl coenzyme A to glucosamine-1-phosphate (GlcN-1-P) to produce N-acetylglucosamine-1-phosphate (GlcNAc-1-P), which is converted into UDP-GlcNAc by the transfer of uridine 5-monophosphate (from uridine 5-triphosphate), a reaction catalyzed by the N-terminal domain. In Staphylococcus carnosus (strain TM300), this protein is Bifunctional protein GlmU.